Here is a 233-residue protein sequence, read N- to C-terminus: Small ribosomal subunit protein uS2c (233 aa).

Belongs to the universal ribosomal protein uS2 family.

It localises to the plastid. Its subcellular location is the chloroplast. In Staurastrum punctulatum (Green alga), this protein is Small ribosomal subunit protein uS2c (rps2).